Reading from the N-terminus, the 89-residue chain is Small ribosomal subunit protein uS15 (89 aa).

This sequence belongs to the universal ribosomal protein uS15 family. In terms of assembly, part of the 30S ribosomal subunit. Forms a bridge to the 50S subunit in the 70S ribosome, contacting the 23S rRNA.

One of the primary rRNA binding proteins, it binds directly to 16S rRNA where it helps nucleate assembly of the platform of the 30S subunit by binding and bridging several RNA helices of the 16S rRNA. In terms of biological role, forms an intersubunit bridge (bridge B4) with the 23S rRNA of the 50S subunit in the ribosome. In Pectobacterium carotovorum subsp. carotovorum (strain PC1), this protein is Small ribosomal subunit protein uS15.